The chain runs to 216 residues: Cytidylate kinase (216 aa).

Glycine 7–threonine 15 serves as a coordination point for ATP.

This sequence belongs to the cytidylate kinase family. Type 1 subfamily.

The protein localises to the cytoplasm. The enzyme catalyses CMP + ATP = CDP + ADP. The catalysed reaction is dCMP + ATP = dCDP + ADP. This is Cytidylate kinase from Chlamydia trachomatis serovar L2 (strain ATCC VR-902B / DSM 19102 / 434/Bu).